Consider the following 144-residue polypeptide: Large ribosomal subunit protein uL15 (144 aa).

The segment at 1 to 49 (MKLNTLSPAAGAKSAAKRVGRGIGSGLGKTAGRGHKGQKSRSGGGVRVG) is disordered. Gly residues predominate over residues 21 to 31 (RGIGSGLGKTA).

This sequence belongs to the universal ribosomal protein uL15 family. As to quaternary structure, part of the 50S ribosomal subunit.

Binds to the 23S rRNA. This chain is Large ribosomal subunit protein uL15, found in Shewanella loihica (strain ATCC BAA-1088 / PV-4).